The primary structure comprises 160 residues: Secreted RxLR effector protein 83 (160 aa).

The signal sequence occupies residues 1–21 (MLVLLAATFFIYISRLTSTDA). The RxLR signature appears at 27 to 30 (RGLR). 2 N-linked (GlcNAc...) asparagine glycosylation sites follow: Asn39 and Asn131.

The protein belongs to the RxLR effector family.

It localises to the secreted. The protein localises to the host nucleus. It is found in the host cytoplasm. Secreted effector that completely suppresses the host cell death induced by cell death-inducing proteins. This is Secreted RxLR effector protein 83 from Plasmopara viticola (Downy mildew of grapevine).